The chain runs to 203 residues: MKSANGPLRVGIGGPVGSGKTALTEKLCKAMRDRYSVAVVTNDIYTREDADALIRMQALSSDRVVGVETGGCPHTAIREDASINLQAIAGLNERIPDLDVIFIESGGDNLAATFSPDLADVTIYVISVCQGEEIPRKGGPGITRSDLLVINKKDLAPYVEVDLDVMDRDAARMRDARPHVFSDLKRGEGVADIVRFLESHGGL.

14–21 serves as a coordination point for GTP; that stretch reads GPVGSGKT.

The protein belongs to the SIMIBI class G3E GTPase family. UreG subfamily. As to quaternary structure, homodimer. UreD, UreF and UreG form a complex that acts as a GTP-hydrolysis-dependent molecular chaperone, activating the urease apoprotein by helping to assemble the nickel containing metallocenter of UreC. The UreE protein probably delivers the nickel.

Its subcellular location is the cytoplasm. In terms of biological role, facilitates the functional incorporation of the urease nickel metallocenter. This process requires GTP hydrolysis, probably effectuated by UreG. In Allorhizobium ampelinum (strain ATCC BAA-846 / DSM 112012 / S4) (Agrobacterium vitis (strain S4)), this protein is Urease accessory protein UreG.